A 443-amino-acid polypeptide reads, in one-letter code: Omega-6 fatty acid desaturase, chloroplastic (443 aa).

Residues 1–64 (MASRIADSLF…AKKRIGCIKA (64 aa)) constitute a chloroplast transit peptide. The Histidine box-1 signature appears at 166 to 170 (HDCAH). A Histidine box-2 motif is present at residues 202–206 (HDRHH). A Histidine box-3 motif is present at residues 362–366 (HIPHH).

This sequence belongs to the fatty acid desaturase type 1 family.

It localises to the plastid. It is found in the chloroplast membrane. The enzyme catalyses a (9Z)-octadecenoyl-containing glycerolipid + 2 reduced [2Fe-2S]-[ferredoxin] + O2 + 2 H(+) = a (9Z,12Z)-octadecadienoyl-containing glycerolipid + 2 oxidized [2Fe-2S]-[ferredoxin] + 2 H2O. It participates in lipid metabolism; polyunsaturated fatty acid biosynthesis. Functionally, chloroplast omega-6 fatty acid desaturase introduces the second double bond in the biosynthesis of 16:3 and 18:3 fatty acids, important constituents of plant membranes. It is thought to use ferredoxin as an electron donor and to act on fatty acids esterified to galactolipids, sulfolipids and phosphatidylglycerol. The chain is Omega-6 fatty acid desaturase, chloroplastic from Brassica napus (Rape).